A 152-amino-acid chain; its full sequence is Transcriptional regulator MraZ (152 aa).

2 SpoVT-AbrB domains span residues 5-52 and 81-124; these read AHAI…PLCE and ASEC…SETR.

The protein belongs to the MraZ family. As to quaternary structure, forms oligomers.

The protein resides in the cytoplasm. Its subcellular location is the nucleoid. The polypeptide is Transcriptional regulator MraZ (Tolumonas auensis (strain DSM 9187 / NBRC 110442 / TA 4)).